The primary structure comprises 217 residues: Probable GTP-binding protein EngB (217 aa).

In terms of domain architecture, EngB-type G spans 37-214 (SGLEVAFAGR…RAAMARLIGD (178 aa)). Residues 45–52 (GRSNVGKS), 72–76 (GRTQE), 92–95 (DMPG), 159–162 (TKAD), and 193–195 (TSS) contribute to the GTP site. 2 residues coordinate Mg(2+): S52 and T74.

Belongs to the TRAFAC class TrmE-Era-EngA-EngB-Septin-like GTPase superfamily. EngB GTPase family. Mg(2+) is required as a cofactor.

Necessary for normal cell division and for the maintenance of normal septation. The sequence is that of Probable GTP-binding protein EngB from Nitrobacter winogradskyi (strain ATCC 25391 / DSM 10237 / CIP 104748 / NCIMB 11846 / Nb-255).